We begin with the raw amino-acid sequence, 446 residues long: Glucosylglycerate hydrolase (446 aa).

Substrate-binding positions include Tyr-36, Trp-40–Asp-43, Tyr-88, Gln-115, and Gly-180. The active-site Proton donor is the Asp-182. Residues Arg-216 and Tyr-375–Trp-376 each bind substrate. The Proton acceptor role is filled by Glu-419. Gln-434 contributes to the substrate binding site.

It belongs to the glycosyl hydrolase 63 family. As to quaternary structure, homotetramer. Dimer of dimers.

The catalysed reaction is (2R)-2-O-(alpha-D-glucopyranosyl)-glycerate + H2O = (R)-glycerate + D-glucose. Activity is not dependent on divalent cations, but it is enhanced by Mg(2+). Catalyzes the hydrolysis of glucosylglycerate (GG) to glycerate and glucose. Involved in recovery from nitrogen starvation by promoting the rapid mobilization of the glucosylglycerate that accumulates under these conditions. Can also hydrolyze mannosylglycerate (MG), with tenfold lower efficiency. The protein is Glucosylglycerate hydrolase of Mycolicibacterium hassiacum (strain DSM 44199 / CIP 105218 / JCM 12690 / 3849) (Mycobacterium hassiacum).